A 56-amino-acid polypeptide reads, in one-letter code: Large ribosomal subunit protein bL33 (56 aa).

This sequence belongs to the bacterial ribosomal protein bL33 family.

The polypeptide is Large ribosomal subunit protein bL33 (Histophilus somni (strain 129Pt) (Haemophilus somnus)).